Consider the following 475-residue polypeptide: Ataxin-10 (475 aa).

Position 10 is an omega-N-methylarginine (arginine 10). Serine 12 carries the phosphoserine; by AURKB modification. Serine 77 carries the post-translational modification Phosphoserine; by PLK1. Threonine 82 carries the phosphothreonine; by PLK1 modification. Serine 430 is subject to Phosphoserine.

The protein belongs to the ataxin-10 family. As to quaternary structure, homooligomer. Interacts with GNB2. Interacts with IQCB1. Interacts with OGT. In terms of processing, polyubiquitinated. Post-translationally, phosphorylation at Ser-12 by AURKB promotes the association of ATXN10 with PLK1. Phosphorylation at Ser-77 and Thr-82 by PLK1 may play a role in the regulation of cytokinesis and may stimulate the proteasome-mediated degradation of ATXN10. Expressed in the central nervous system.

Its subcellular location is the cytoplasm. It is found in the perinuclear region. The protein localises to the midbody. The protein resides in the cytoskeleton. It localises to the cilium basal body. Its subcellular location is the microtubule organizing center. It is found in the centrosome. The protein localises to the centriole. In terms of biological role, may play a role in the regulation of cytokinesis. May play a role in signaling by stimulating protein glycosylation. Induces neuritogenesis by activating the Ras-MAP kinase pathway and is necessary for the survival of cerebellar neurons. Does not appear to play a major role in ciliogenesis. This chain is Ataxin-10 (ATXN10), found in Homo sapiens (Human).